Consider the following 314-residue polypeptide: Ribosomal protein uL3 glutamine methyltransferase (314 aa).

It belongs to the protein N5-glutamine methyltransferase family. PrmB subfamily.

The catalysed reaction is L-glutaminyl-[ribosomal protein uL3] + S-adenosyl-L-methionine = N(5)-methyl-L-glutaminyl-[ribosomal protein uL3] + S-adenosyl-L-homocysteine + H(+). In terms of biological role, methylates large ribosomal subunit protein uL3 on a specific glutamine residue. This is Ribosomal protein uL3 glutamine methyltransferase from Vibrio cholerae serotype O1 (strain ATCC 39315 / El Tor Inaba N16961).